We begin with the raw amino-acid sequence, 151 residues long: UPF0756 membrane protein lhv_0995 (151 aa).

5 helical membrane-spanning segments follow: residues 4-24 (WLFL…SLII), 25-45 (ATGV…LPVI), 52-72 (WGVT…QIGF), 78-98 (TFKS…AILS), and 115-135 (LVLG…GPVI).

The protein belongs to the UPF0756 family.

The protein resides in the cell membrane. The chain is UPF0756 membrane protein lhv_0995 from Lactobacillus helveticus (strain DPC 4571).